The following is a 94-amino-acid chain: Enhancer of yellow 2 transcription factor (94 aa).

Belongs to the ENY2 family. In terms of assembly, component of the nuclear pore complex (NPC)-associated AMEX complex (anchoring and mRNA export complex), composed of at least e(y)2 and xmas-2. Component of the SAGA transcription coactivator-HAT complexes, at least composed of Ada2b, e(y)2, Pcaf/Gcn5, Taf10 and Nipped-A/Trrap. Within the SAGA complex, e(y)2, Sgf11, and not/nonstop form an additional subcomplex of SAGA called the DUB module (deubiquitination module). Component of the THO complex, composed of at least e(y)2, HPR1, THO2, THOC5, THOC6 and THOC7. Interacts with e(y)1. Interacts with su(Hw) (via zinc fingers). Interacts with xmas-2; required for localization to the nuclear periphery. Interacts with the nuclear pore complex (NPC).

It localises to the nucleus. Its subcellular location is the nucleoplasm. The protein resides in the cytoplasm. In terms of biological role, involved in mRNA export coupled transcription activation by association with both the AMEX and the SAGA complexes. The SAGA complex is a multiprotein complex that activates transcription by remodeling chromatin and mediating histone acetylation and deubiquitination. Within the SAGA complex, participates in a subcomplex that specifically deubiquitinates histone H2B. The SAGA complex is recruited to specific gene promoters by activators, where it is required for transcription. Required for nuclear receptor-mediated transactivation. Involved in transcription elongation by recruiting the THO complex onto nascent mRNA. The AMEX complex functions in docking export-competent ribonucleoprotein particles (mRNPs) to the nuclear entrance of the nuclear pore complex (nuclear basket). AMEX participates in mRNA export and accurate chromatin positioning in the nucleus by tethering genes to the nuclear periphery. The sequence is that of Enhancer of yellow 2 transcription factor from Drosophila mojavensis (Fruit fly).